Reading from the N-terminus, the 167-residue chain is Dual specificity protein phosphatase 1B (167 aa).

The 142-residue stretch at 24–165 (DLSEIQQGLF…LQQFEKSIQG (142 aa)) folds into the Tyrosine-protein phosphatase domain. Cys-109 functions as the Phosphocysteine intermediate in the catalytic mechanism.

It belongs to the protein-tyrosine phosphatase family. Non-receptor class dual specificity subfamily. Associates with MPK3 and MPK6. Interacts with MPK6 is promoted during HR-like responses triggered by fungal elicitors, whereas interaction with MPK3 in repressed. In terms of tissue distribution, expressed in flowers, seedlings, roots, leaves, and seeds. Present in stomata and meristematic cells.

It localises to the nucleus. The protein resides in the cytoplasm. It catalyses the reaction O-phospho-L-tyrosyl-[protein] + H2O = L-tyrosyl-[protein] + phosphate. The enzyme catalyses O-phospho-L-seryl-[protein] + H2O = L-seryl-[protein] + phosphate. It carries out the reaction O-phospho-L-threonyl-[protein] + H2O = L-threonyl-[protein] + phosphate. In terms of biological role, has a dual specificity toward Ser/Thr and Tyr-containing proteins. Prevents biotic and abiotic stress responses, including ozone, oxidative stress and pathogen attacks; represses MAPK activities during hypersensitive response to limit the spread of the HR response after infection by necrotrophic pathogen such as Botrytis cinerea. May be also involved in ABA and salt responses. Dephosphorylates MPK3 and MPK6. The polypeptide is Dual specificity protein phosphatase 1B (DSPTP1B) (Arabidopsis thaliana (Mouse-ear cress)).